The sequence spans 485 residues: uncharacterized protein (485 aa).

11 helical membrane-spanning segments follow: residues 79-99, 117-137, 139-159, 170-190, 199-219, 275-295, 313-333, 355-375, 380-400, 421-441, and 448-468; these read LVTLGATLYTLGILFGNLIFA, VFALLQIPIALSVNLAMFLVF, FFSGLFGSVGLSNGSGSLADL, VIYFTVLSIGPGIAPIISGFI, WEFWILLILSGFNLFWAFLLL, ILICVACTIGSIYGMINLVLI, GLMYISITLGLFSAVFIAMPI, LPMGFIGITLFEIGILLFGWT, IFWFVPTIGSAIMGGGYIMTS, GVKIFQLLFGAIFPLFAESLF, and WGCTLLAFILLACGCSLPILF.

Belongs to the major facilitator superfamily. CAR1 family.

The protein resides in the membrane. This is an uncharacterized protein from Schizosaccharomyces pombe (strain 972 / ATCC 24843) (Fission yeast).